The chain runs to 500 residues: Probable malate:quinone oxidoreductase (500 aa).

It belongs to the MQO family. It depends on FAD as a cofactor.

It catalyses the reaction (S)-malate + a quinone = a quinol + oxaloacetate. It functions in the pathway carbohydrate metabolism; tricarboxylic acid cycle; oxaloacetate from (S)-malate (quinone route): step 1/1. This is Probable malate:quinone oxidoreductase from Bacillus cereus (strain G9842).